The following is a 274-amino-acid chain: Putative phosphoenolpyruvate synthase regulatory protein (274 aa).

154 to 161 is an ADP binding site; the sequence is GVSRCGKT.

This sequence belongs to the pyruvate, phosphate/water dikinase regulatory protein family. PSRP subfamily.

It catalyses the reaction [pyruvate, water dikinase] + ADP = [pyruvate, water dikinase]-phosphate + AMP + H(+). It carries out the reaction [pyruvate, water dikinase]-phosphate + phosphate + H(+) = [pyruvate, water dikinase] + diphosphate. Its function is as follows. Bifunctional serine/threonine kinase and phosphorylase involved in the regulation of the phosphoenolpyruvate synthase (PEPS) by catalyzing its phosphorylation/dephosphorylation. This chain is Putative phosphoenolpyruvate synthase regulatory protein, found in Pseudomonas aeruginosa (strain LESB58).